We begin with the raw amino-acid sequence, 559 residues long: Glucose-6-phosphate isomerase (559 aa).

Catalysis depends on glutamate 363, which acts as the Proton donor. Active-site residues include histidine 394 and lysine 523.

The protein belongs to the GPI family.

It localises to the cytoplasm. It carries out the reaction alpha-D-glucose 6-phosphate = beta-D-fructose 6-phosphate. Its pathway is carbohydrate biosynthesis; gluconeogenesis. It participates in carbohydrate degradation; glycolysis; D-glyceraldehyde 3-phosphate and glycerone phosphate from D-glucose: step 2/4. Functionally, catalyzes the reversible isomerization of glucose-6-phosphate to fructose-6-phosphate. In Bartonella henselae (strain ATCC 49882 / DSM 28221 / CCUG 30454 / Houston 1) (Rochalimaea henselae), this protein is Glucose-6-phosphate isomerase.